The sequence spans 303 residues: Probable cell division protein WhiA (303 aa).

The H-T-H motif DNA-binding region spans Ser-272–Leu-303.

The protein belongs to the WhiA family.

Its function is as follows. Involved in cell division and chromosome segregation. This is Probable cell division protein WhiA from Streptococcus sanguinis (strain SK36).